A 144-amino-acid polypeptide reads, in one-letter code: MTVSEIRVRKINPRAKIPKRQSEGAAGYDIHSVESGRIPPNGRKSVRTGLAWDVPQSVVGLVFGRSGLALRNWIEVVETCVHPGEDKELVITLVNNGREVFEYEESSRIAQLVFVPVLSCEIDLVESLDLTERGCLGFGSTGMK.

Residues S66, R133, F138, and G139 each contribute to the dUMP site.

The protein belongs to the dUTPase family. As to quaternary structure, homotrimer. It depends on Mg(2+) as a cofactor.

The catalysed reaction is dUTP + H2O = dUMP + diphosphate + H(+). It functions in the pathway pyrimidine metabolism; dUMP biosynthesis; dUMP from dCTP (dUTP route): step 2/2. In terms of biological role, involved in nucleotide metabolism via production of dUMP, the immediate precursor of thymidine nucleotides, and decreases the intracellular concentration of dUTP so that uracil cannot be incorporated into DNA. This is Deoxyuridine 5'-triphosphate nucleotidohydrolase (DUT1) from Encephalitozoon cuniculi (strain GB-M1) (Microsporidian parasite).